The following is a 407-amino-acid chain: Argininosuccinate synthase (407 aa).

ATP-binding positions include 10–18 and Ala37; that span reads AYSGGLDTS. Residues Tyr88 and Ser93 each coordinate L-citrulline. Position 118 (Gly118) interacts with ATP. L-aspartate is bound by residues Thr120, Asn124, and Asp125. Asn124 lines the L-citrulline pocket. L-citrulline is bound by residues Arg128, Ser180, Ser189, Glu265, and Tyr277.

The protein belongs to the argininosuccinate synthase family. Type 1 subfamily. In terms of assembly, homotetramer.

The protein localises to the cytoplasm. It catalyses the reaction L-citrulline + L-aspartate + ATP = 2-(N(omega)-L-arginino)succinate + AMP + diphosphate + H(+). It participates in amino-acid biosynthesis; L-arginine biosynthesis; L-arginine from L-ornithine and carbamoyl phosphate: step 2/3. This Alcanivorax borkumensis (strain ATCC 700651 / DSM 11573 / NCIMB 13689 / SK2) protein is Argininosuccinate synthase.